Reading from the N-terminus, the 152-residue chain is Regulatory protein RecX (152 aa).

This sequence belongs to the RecX family.

It is found in the cytoplasm. Functionally, modulates RecA activity. The chain is Regulatory protein RecX from Chromobacterium violaceum (strain ATCC 12472 / DSM 30191 / JCM 1249 / CCUG 213 / NBRC 12614 / NCIMB 9131 / NCTC 9757 / MK).